The primary structure comprises 257 residues: Zinc transporter ZupT (257 aa).

A run of 8 helical transmembrane segments spans residues 5–25 (LILTILAGAATFIGAFLGVLG), 32–52 (LLAFSLGFAAGIMLLISLMEM), 61–81 (GMSPVLGYGMFIFGLLGYLGL), 109–129 (AILLTLGISLHNFPEGIATFV), 137–157 (LGFGIALAVALHNIPEGLAVV), 171–191 (ILWAGISGLAEILGGVLAWLI), 195–215 (MISPVVMAAIMAAVAGIMVAL), and 236–256 (GVLCGMSVMGFSLVLLQTAGI). Fe(2+)-binding residues include Asn-120 and Glu-123. Residues Glu-123 and His-148 each contribute to the Zn(2+) site. 3 residues coordinate Fe(2+): Asn-149, Glu-152, and Glu-181. Zn(2+) is bound at residue Glu-152.

This sequence belongs to the ZIP transporter (TC 2.A.5) family. ZupT subfamily.

It localises to the cell inner membrane. It carries out the reaction Zn(2+)(in) = Zn(2+)(out). Its function is as follows. Mediates zinc uptake. May also transport other divalent cations. The sequence is that of Zinc transporter ZupT from Shigella dysenteriae serotype 1 (strain Sd197).